Reading from the N-terminus, the 100-residue chain is Small ubiquitin-related modifier 1 (100 aa).

Residues Met-1 to Ala-12 show a composition bias toward basic and acidic residues. Positions Met-1 to Leu-23 are disordered. The region spanning Ala-19 to Gly-96 is the Ubiquitin-like domain. Gly-96 is covalently cross-linked (Glycyl lysine isopeptide (Gly-Lys) (interchain with K-? in acceptor proteins)).

It belongs to the ubiquitin family. SUMO subfamily. In terms of assembly, interacts with SAE2, SCE1 and SIZ1. Covalently attached to a number of proteins.

It is found in the nucleus. It localises to the cytoplasm. Functionally, ubiquitin-like protein which can be covalently attached to target lysines as a monomer. Does not seem to be involved in protein degradation and may function as an antagonist of ubiquitin in the degradation process. In Oryza sativa subsp. japonica (Rice), this protein is Small ubiquitin-related modifier 1 (SUMO1).